The chain runs to 463 residues: tRNA (guanine(10)-N(2))-methyltransferase TRMT11 (463 aa).

A2 carries the N-acetylalanine modification.

Belongs to the class I-like SAM-binding methyltransferase superfamily. TRM11 methyltransferase family. As to quaternary structure, part of the heterodimeric TRMT11-TRM112 methyltransferase complex; this complex forms an active tRNA methyltransferase, where TRMT112 acts as an activator of the catalytic subunit TRMT11.

Its subcellular location is the cytoplasm. It carries out the reaction guanosine(10) in tRNA + S-adenosyl-L-methionine = N(2)-methylguanosine(10) in tRNA + S-adenosyl-L-homocysteine + H(+). Functionally, catalytic subunit of the TRMT11-TRM112 methyltransferase complex, that specifically mediates the S-adenosyl-L-methionine-dependent N(2)-methylation of guanosine nucleotide at position 10 (m2G10) in tRNAs. This is one of the major tRNA (guanine-N(2))-methyltransferases. The polypeptide is tRNA (guanine(10)-N(2))-methyltransferase TRMT11 (Rattus norvegicus (Rat)).